The following is an 813-amino-acid chain: Phosphate transporter PHO1 homolog 3 (813 aa).

Residues 1–359 enclose the SPX domain; that stretch reads MKFGKEFSSQ…SRDATKPYMK (359 aa). Topologically, residues 1–411 are cytoplasmic; the sequence is MKFGKEFSSQ…KAKRERHRIT (411 aa). The segment at 214–266 is disordered; it reads EHMEAIQEGGSSRAGLMEDDEEDEDEQNETSVVSTGAIDNETTTSRMRGARPS. Residues 230-241 show a composition bias toward acidic residues; it reads MEDDEEDEDEQN. A helical membrane pass occupies residues 412-432; sequence FSTGFSAGCVFSLIVALVAII. Over 433 to 450 the chain is Extracellular; it reads RTRNLLEMEGQKEYMNTM. A helical transmembrane segment spans residues 451 to 471; the sequence is FPLYSLFGFIVLHIIVYAANI. Residues 472-496 are Cytoplasmic-facing; sequence YYWRRYRVNYSFIFGFKQGTELGYR. The chain crosses the membrane as a helical span at residues 497–517; the sequence is QVLLVGFSIGVLALLCVLANL. Over 518–533 the chain is Extracellular; sequence DMEADPKTKAYQARTE. The helical transmembrane segment at 534–554 threads the bilayer; it reads ILPLILLAAMFIVLVLPFNYF. At 555–684 the chain is on the cytoplasmic side; the sequence is YRSSRFFFLT…SIQKGQVAWR (130 aa). The EXS domain maps to 618-813; the sequence is KESDVYNTFF…NYDEDDDKDN (196 aa). A helical membrane pass occupies residues 685–705; that stretch reads VLAAVFSFIAAIFCTYWDFVH. The Extracellular segment spans residues 706–729; it reads DWGLLNRTSKNRWLRDKLLVPQKK. The helical transmembrane segment at 730-750 threads the bilayer; it reads VYFIAMVLNVLLRFAWIQTVL. Residues 751 to 813 are Cytoplasmic-facing; the sequence is DFNFSFMHRQ…NYDEDDDKDN (63 aa).

This sequence belongs to the SYG1 (TC 2.A.94) family. As to expression, expressed in vascular cylinder of roots, leaves and filaments. Expressed in receptacle and stigma apex.

The protein resides in the cell membrane. May transport inorganic phosphate (Pi). This is Phosphate transporter PHO1 homolog 3 (PHO1;H3) from Arabidopsis thaliana (Mouse-ear cress).